Here is a 1284-residue protein sequence, read N- to C-terminus: ABC multidrug transporter atrC (1284 aa).

Positions 1–11 (MKSTAESKETP) are enriched in basic and acidic residues. A disordered region spans residues 1–24 (MKSTAESKETPSQDESTTSVPCTE). Helical transmembrane passes span 55-75 (AVAI…NLIF), 99-119 (AAEL…LSYT), 178-198 (IGLL…RLWC), 203-223 (TLIC…VAAV), 282-302 (LLGL…GLAF), and 320-340 (IFTV…LAPY). The region spanning 55–346 (AVAILAACAS…LAPYSIEFSR (292 aa)) is the ABC transmembrane type-1 1 domain. The ABC transporter 1 domain maps to 381–626 (VELENVTFSY…DGVYAGLVKI (246 aa)). Residues N385 and N401 are each glycosylated (N-linked (GlcNAc...) asparagine). 416 to 423 (GQSGSGKS) contacts ATP. Residues N488 and N632 are each glycosylated (N-linked (GlcNAc...) asparagine). The next 2 membrane-spanning stretches (helical) occupy residues 705–725 (LVVL…AILM) and 745–765 (FYAS…LAVG). The ABC transmembrane type-1 2 domain maps to 705–992 (LVVLLGCLGG…LFQWSTSITK (288 aa)). N800 carries an N-linked (GlcNAc...) asparagine glycan. A run of 4 helical transmembrane segments spans residues 824-844 (IALV…AIAF), 846-866 (WKLG…AGMV), 931-951 (MICF…GFWY), and 955-975 (LVSL…SVFF). The N-linked (GlcNAc...) asparagine glycan is linked to N995. One can recognise an ABC transporter 2 domain in the interval 1027-1280 (IAMDNVRFSY…GGLYRRMCEA (254 aa)). 1062 to 1069 (GSSGCGKS) provides a ligand contact to ATP. N-linked (GlcNAc...) asparagine glycosylation is present at N1122.

This sequence belongs to the ABC transporter superfamily. ABCB family. Multidrug resistance exporter (TC 3.A.1.201) subfamily.

Its subcellular location is the cell membrane. Its function is as follows. Pleiotropic ABC efflux transporter involved in the protection of the cells against a wide range of toxic compounds. This Emericella nidulans (Aspergillus nidulans) protein is ABC multidrug transporter atrC.